A 98-amino-acid polypeptide reads, in one-letter code: NADH-ubiquinone oxidoreductase chain 4L (98 aa).

Transmembrane regions (helical) follow at residues 1–21 (MTSI…GVLM), 28–48 (STLL…SLLI), and 59–79 (APLI…ALLV).

It belongs to the complex I subunit 4L family. As to quaternary structure, core subunit of respiratory chain NADH dehydrogenase (Complex I) which is composed of 45 different subunits.

The protein localises to the mitochondrion inner membrane. It carries out the reaction a ubiquinone + NADH + 5 H(+)(in) = a ubiquinol + NAD(+) + 4 H(+)(out). Its function is as follows. Core subunit of the mitochondrial membrane respiratory chain NADH dehydrogenase (Complex I) which catalyzes electron transfer from NADH through the respiratory chain, using ubiquinone as an electron acceptor. Part of the enzyme membrane arm which is embedded in the lipid bilayer and involved in proton translocation. The sequence is that of NADH-ubiquinone oxidoreductase chain 4L (MT-ND4L) from Phascolarctos cinereus (Koala).